Reading from the N-terminus, the 614-residue chain is Glucosidase 2 subunit beta (614 aa).

The N-terminal stretch at 1 to 19 is a signal peptide; that stretch reads MGLHAILLLLLLRISASAA. N-linked (GlcNAc...) asparagine glycosylation occurs at Asn-115. Composition is skewed to basic and acidic residues over residues 194–222, 231–272, and 324–351; these read EEER…KKAS, QENH…HDPE, and TGEK…HSEE. A disordered region spans residues 194–396; the sequence is EEERLRKEKE…SHESDDEYVD (203 aa). Residues 352–364 are compositionally biased toward acidic residues; it reads THEDESDVPESAE. Over residues 372-382 the composition is skewed to basic and acidic residues; that stretch reads SEVEDDRHKYD. A compositionally biased stretch (acidic residues) spans 383 to 396; that stretch reads DEDFSHESDDEYVD. The region spanning 497 to 592 is the MRH domain; it reads DQCFESKEGK…VLSTPALCDE (96 aa). Intrachain disulfides connect Cys-499-Cys-512, Cys-549-Cys-578, and Cys-563-Cys-590.

Heterodimer of a catalytic alpha subunit and a beta subunit.

It is found in the endoplasmic reticulum. It participates in glycan metabolism; N-glycan metabolism. Functionally, regulatory subunit of glucosidase II. May be required for defense response elicited by pathogen-associated molecular patterns (PAMPs). The protein is Glucosidase 2 subunit beta of Oryza sativa subsp. japonica (Rice).